A 494-amino-acid polypeptide reads, in one-letter code: Potassium voltage-gated channel subfamily A member 2 (494 aa).

The segment at 1-25 (MTVATGDPSDEAAAHPGNPAEYDPD) is disordered. Residues 1 to 124 (MTVATGDPSD…YELGDEAIEL (124 aa)) form a tetramerization domain region. The Cytoplasmic portion of the chain corresponds to 1–159 (MTVATGDPSD…LLFEYPESSG (159 aa)). A helical membrane pass occupies residues 160 to 181 (PARIIAIISVMVILISIVSFCL). Residues 182–216 (ETLPIFRNDDDEPHSVFDTNTNTTIYFTSTYFTDP) lie on the Extracellular side of the membrane. An N-linked (GlcNAc...) asparagine glycan is attached at asparagine 203. Residues 217–238 (FFILETLCIIWFSFEFLVRLFA) traverse the membrane as a helical segment. Residue cysteine 239 is the site of S-palmitoyl cysteine attachment. At 239–249 (CPSKSGFFGNV) the chain is on the cytoplasmic side. The helical transmembrane segment at 250 to 270 (MNIIDVVAIIPYFITLATELA) threads the bilayer. Topologically, residues 271-284 (EKPEDGQAGQQAMS) are extracellular. Residues 285-305 (LAILRVIRLVRVFRIFKLSRH) traverse the membrane as a helical; Voltage-sensor segment. Residues 306–320 (SKGLQILGQTLKASM) are Cytoplasmic-facing. An S4-S5 linker region spans residues 307–320 (KGLQILGQTLKASM). The helical transmembrane segment at 321 to 342 (RELGLLIFFLFIGVILFSSAVY) threads the bilayer. The Extracellular portion of the chain corresponds to 343–356 (FAEADEPESQFESI). The helical intramembrane region spans 357-368 (PDAFWWAVVSMT). Residues 369–374 (TVGYGD) carry the Selectivity filter motif. Residues 369-376 (TVGYGDMV) lie within the membrane without spanning it. Residues 377 to 383 (PTTIGGK) are Extracellular-facing. The helical transmembrane segment at 384-412 (IVGSLCAIAGVLTIALPVPVIVSNFNYFY) threads the bilayer. Residues 413 to 494 (HRETEGEEQA…VNITKMLTDV (82 aa)) are Cytoplasmic-facing. Positions 492 to 494 (TDV) match the PDZ-binding motif.

It belongs to the potassium channel family. A (Shaker) (TC 1.A.1.2) subfamily. Kv1.2/KCNA2 sub-subfamily. Homotetramer and heterotetramer with other family members. As to expression, expressed in oligodendrocytes.

Its subcellular location is the cell membrane. It catalyses the reaction K(+)(in) = K(+)(out). In terms of biological role, voltage-gated potassium channel that mediates transmembrane potassium transport in excitable membranes, primarily in the brain and central nervous system. Prevents aberrant action potential firing and regulates neuronal output. Forms tetrameric potassium-selective channels through which potassium ions pass in accordance with their electrochemical gradient. The channel alternates between opened and closed conformations in response to the voltage difference across the membrane. Can form functional homotetrameric channels and heterotetrameric channels with other family members; the channels characteristics depend critically on the types of channel-forming alpha subunits that are present. Channel properties are modulated by cytoplasmic beta subunits that regulate the subcellular location of the alpha subunits. In vivo, membranes probably contain a mixture of heteromeric potassium channel complexes, making it difficult to assign currents observed in intact tissues to any particular potassium channel family member. Homotetrameric KCNA2 forms a delayed-rectifier potassium channel that opens in response to membrane depolarization, followed by slow spontaneous channel closure. Regulates neuronal excitability and plays a role as pacemaker in the regulation of neuronal action potentials. KCNA2-containing channels play a presynaptic role and prevent hyperexcitability and aberrant action potential firing. Response to toxins that are selective for KCNA2-containing potassium channels suggests that in Purkinje cells, dendritic subthreshold KCNA2-containing potassium channels prevent random spontaneous calcium spikes, suppressing dendritic hyperexcitability without hindering the generation of somatic action potentials, and thereby play an important role in motor coordination. Plays a role in the induction of long-term potentiation of neuron excitability in the CA3 layer of the hippocampus. The chain is Potassium voltage-gated channel subfamily A member 2 (kcna2) from Oncorhynchus mykiss (Rainbow trout).